We begin with the raw amino-acid sequence, 266 residues long: Heat-inducible transcription repressor HrcA (266 aa).

It belongs to the HrcA family.

Functionally, negative regulator of class I heat shock genes (grpE-dnaK-dnaJ and groELS operons). Prevents heat-shock induction of these operons. This Helicobacter pylori (strain ATCC 700392 / 26695) (Campylobacter pylori) protein is Heat-inducible transcription repressor HrcA.